The chain runs to 30 residues: Pyrrole-2-carboxylate oxygenase (30 aa).

In terms of assembly, homotrimer. It depends on FAD as a cofactor.

It carries out the reaction pyrrole-2-carboxylate + NADH + O2 + H(+) = 5-hydroxypyrrole-2-carboxylate + NAD(+) + H2O. Its function is as follows. Monooxygenase that initiates the degradation of pyrrole-2-carboxylate, which allows Arthrobacter sp. strain Py1 to grow on pyrrole-2-carboxylate as sole carbon, nitrogen, and energy source. To a lesser extent, can also use pyrrole, pyrrole-2-aldehyde, and indole-2-carboxylate as substrate. This chain is Pyrrole-2-carboxylate oxygenase, found in Arthrobacter sp. (strain Py1).